The primary structure comprises 269 residues: Hydroxyethylthiazole kinase (269 aa).

Methionine 42 provides a ligand contact to substrate. Residues arginine 118 and serine 164 each contribute to the ATP site. Glycine 191 lines the substrate pocket.

This sequence belongs to the Thz kinase family. Mg(2+) is required as a cofactor.

The enzyme catalyses 5-(2-hydroxyethyl)-4-methylthiazole + ATP = 4-methyl-5-(2-phosphooxyethyl)-thiazole + ADP + H(+). It participates in cofactor biosynthesis; thiamine diphosphate biosynthesis; 4-methyl-5-(2-phosphoethyl)-thiazole from 5-(2-hydroxyethyl)-4-methylthiazole: step 1/1. Catalyzes the phosphorylation of the hydroxyl group of 4-methyl-5-beta-hydroxyethylthiazole (THZ). The protein is Hydroxyethylthiazole kinase of Listeria monocytogenes serotype 4a (strain HCC23).